Consider the following 394-residue polypeptide: Proliferation-associated protein 2G4 (394 aa).

N-acetylserine is present on S2. The residue at position 2 (S2) is a Phosphoserine. A necessary for nucleolar localization region spans residues 2–48 (SGEDEQQEQTIAEDLVVTKYKMGGDIANRVLRSLVEASSSGVSVLSL). The interval 46–54 (LSLCEKGDA) is RNA-binding. A Glycyl lysine isopeptide (Lys-Gly) (interchain with G-Cter in SUMO2) cross-link involves residue K298. The interval 301 to 394 (LLQPFNVLYE…ETLEENEAGD (94 aa)) is necessary for nucleolar localization. S335 carries the post-translational modification Phosphoserine. The interval 358-394 (LQSSASRKTQKKKKKKASKTAENATSGETLEENEAGD) is disordered. S361 bears the Phosphoserine; by PKC/PRKCD mark. Residues 361–375 (SASRKTQKKKKKKAS) are interaction with RNA. Residues 365 to 375 (KTQKKKKKKAS) are compositionally biased toward basic residues. Phosphothreonine is present on residues T366 and T386.

The protein belongs to the peptidase M24 family. In terms of assembly, isoform 2 interacts with the cytoplasmic domain of non-phosphorylated ERBB3; the interaction requires PKC activity. Interacts with AR. Treatment with HRG leads to dissociation from ERBB3 and increases association with AR. Interacts with NCL/nucleolin. Component of a ribonucleoprotein complex containing at least PA2G4, NCL, TOP1, PABPC2, RPLP0, acetylated histone H1 (HIST1H1A or H1F1), histone H1 2/4, RPL4, RPL8, RPL15, RPL18, RPL18A, RPL21, RPL11, RPL12, RPL28, RPL27, RPLP2 and RPL24. Interacts with HDAC2. Interacts with RB1; the interaction is enhanced upon PA2G4 dephosphorylation. Interacts with AKT1. Isoform 1 and isoform 2 interact with RNF20. Isoform 2 interacts with HUWE1. Interacts with DNAJC21. Phosphorylated on serine and threonine residues. Phosphorylation is enhanced by HRG treatment. Basal phosphorylation is PKC-dependent and HRG-induced phosphorylation is predominantly PKC-independent. Phosphorylation at Ser-361 by PKC/PRKCD regulates its nucleolar localization. In terms of processing, in cancer cells, isoform 2 is polyubiquitinated leading to its proteasomal degradation and phosphorylation by PKC/PRKCD enhances polyubiquitination. In terms of tissue distribution, isoform 2 is undetectable whereas isoform 1 is strongly expressed in cancer cells (at protein level). Isoform 1 and isoform 2 are widely expressed, including heart, brain, lung, pancreas, skeletal muscle, kidney, placenta and liver.

The protein localises to the cytoplasm. It localises to the nucleus. Its subcellular location is the nucleolus. Its function is as follows. May play a role in a ERBB3-regulated signal transduction pathway. Seems be involved in growth regulation. Acts a corepressor of the androgen receptor (AR) and is regulated by the ERBB3 ligand neuregulin-1/heregulin (HRG). Inhibits transcription of some E2F1-regulated promoters, probably by recruiting histone acetylase (HAT) activity. Binds RNA. Associates with 28S, 18S and 5.8S mature rRNAs, several rRNA precursors and probably U3 small nucleolar RNA. May be involved in regulation of intermediate and late steps of rRNA processing. May be involved in ribosome assembly. Mediates cap-independent translation of specific viral IRESs (internal ribosomal entry site). Regulates cell proliferation, differentiation, and survival. Isoform 1 suppresses apoptosis whereas isoform 2 promotes cell differentiation. This Homo sapiens (Human) protein is Proliferation-associated protein 2G4 (PA2G4).